A 437-amino-acid polypeptide reads, in one-letter code: Cytochrome b (437 aa).

Residues 45-65 traverse the membrane as a helical segment; that stretch reads WIWGIVLAFTLVLQIVTGIVL. Heme b contacts are provided by His97 and His111. A run of 9 helical transmembrane segments spans residues 100 to 120, 129 to 149, 156 to 176, 194 to 214, 248 to 268, 298 to 318, 330 to 350, 365 to 385, and 391 to 411; these read GASLFFLAVYIHIFRGLYYGS, WIVGMVIYLLMMGTAFMGYVL, FWGATVITGLFGAIPGIGPSI, FFSLHYLLPFVIAALVAIHIW, FVIKDLFALALVLLGFFAVVA, FLPFYAILRAFAADVWVVILV, FFGVIAMFGAIAVMALAPWLD, MWFWFLVLDFVVLTWVGAMPT, and WISLIASTYWFAYFLVILPLL. His198 and His212 together coordinate heme b.

Belongs to the cytochrome b family. In terms of assembly, the main subunits of complex b-c1 are: cytochrome b, cytochrome c1 and the Rieske protein. It depends on heme b as a cofactor.

It localises to the cell membrane. Component of the ubiquinol-cytochrome c reductase complex (complex III or cytochrome b-c1 complex), which is a respiratory chain that generates an electrochemical potential coupled to ATP synthesis. This is Cytochrome b (petB) from Rhodobacter capsulatus (strain ATCC BAA-309 / NBRC 16581 / SB1003).